The chain runs to 951 residues: Serine/threonine-protein phosphatase 4 regulatory subunit 1 (951 aa).

HEAT repeat units follow at residues 26–63, 65–81, 82–119, 127–164, 168–206, 208–246, 248–285, and 287–324; these read ESDV…VFNR, MVAR…CDDE, RDCI…FCQE, AFSK…QELI, DVET…MVGK, ITER…VVGQ, ATEE…ATCQ, and IRRT…TFAN. 3 disordered regions span residues 325 to 377, 411 to 451, and 474 to 499; these read PSSS…HSSA, SESP…PLDQ, and QQDP…GPPN. Positions 332-365 are enriched in basic and acidic residues; sequence FKDESKSSEDSSAEDKDRMRDNDVVEEEHRRPED. Composition is skewed to polar residues over residues 411 to 421 and 430 to 445; these read SESPQEAASND and NSKS…SSPE. Residues 474-487 are compositionally biased toward basic and acidic residues; that stretch reads QQDPEERLSPERTG. An HEAT 9 repeat occupies 506–543; sequence KELEEMIENLEPHMDDPDVKAQVDVLSAALRASSLDAH. Residues 590 to 612 form a disordered region; it reads DYVHGGADVSPGDGFSPDEDRRP. HEAT repeat units follow at residues 699–735, 800–838, and 862–899; these read LTAA…LLHI, WISY…RCPK, and QFAV…EKEY. Residue Ser936 is modified to Phosphoserine.

As to quaternary structure, serine/threonine-protein phosphatase 4 (PP4) occurs in different assemblies of the catalytic and one or more regulatory subunits. Component of the PP4 complex PPP4C-PPP4R1. Interacts with HDAC3.

Regulatory subunit of serine/threonine-protein phosphatase 4. May play a role in regulation of cell division in renal glomeruli. The PPP4C-PPP4R1 PP4 complex may play a role in dephosphorylation and regulation of HDAC3. Plays a role in the inhibition of TNF-induced NF-kappa-B activation by regulating the dephosphorylation of TRAF2. In Mus musculus (Mouse), this protein is Serine/threonine-protein phosphatase 4 regulatory subunit 1 (Ppp4r1).